A 498-amino-acid chain; its full sequence is ATP synthase subunit beta, chloroplastic (498 aa).

ATP is bound at residue 172–179; the sequence is GGAGVGKT.

It belongs to the ATPase alpha/beta chains family. F-type ATPases have 2 components, CF(1) - the catalytic core - and CF(0) - the membrane proton channel. CF(1) has five subunits: alpha(3), beta(3), gamma(1), delta(1), epsilon(1). CF(0) has four main subunits: a(1), b(1), b'(1) and c(9-12).

It is found in the plastid. It localises to the chloroplast thylakoid membrane. It catalyses the reaction ATP + H2O + 4 H(+)(in) = ADP + phosphate + 5 H(+)(out). Its function is as follows. Produces ATP from ADP in the presence of a proton gradient across the membrane. The catalytic sites are hosted primarily by the beta subunits. This chain is ATP synthase subunit beta, chloroplastic, found in Helianthus annuus (Common sunflower).